Here is an 869-residue protein sequence, read N- to C-terminus: Protein translocase subunit SecA (869 aa).

Residues Q88, 106-110 (GEGKT), and D509 contribute to the ATP site. Over residues 818-840 (QDEGLKFNQREGEDAPAVREKKI) the composition is skewed to basic and acidic residues. The segment at 818–869 (QDEGLKFNQREGEDAPAVREKKIPRNSPCPCGSGKKYKDCCGKSGPKKGILA) is disordered. Residues C846, C848, C857, and C858 each coordinate Zn(2+).

The protein belongs to the SecA family. As to quaternary structure, monomer and homodimer. Part of the essential Sec protein translocation apparatus which comprises SecA, SecYEG and auxiliary proteins SecDF-YajC and YidC. It depends on Zn(2+) as a cofactor.

It localises to the cell inner membrane. Its subcellular location is the cytoplasm. The catalysed reaction is ATP + H2O + cellular proteinSide 1 = ADP + phosphate + cellular proteinSide 2.. Functionally, part of the Sec protein translocase complex. Interacts with the SecYEG preprotein conducting channel. Has a central role in coupling the hydrolysis of ATP to the transfer of proteins into and across the cell membrane, serving as an ATP-driven molecular motor driving the stepwise translocation of polypeptide chains across the membrane. The sequence is that of Protein translocase subunit SecA from Campylobacter curvus (strain 525.92).